Here is a 186-residue protein sequence, read N- to C-terminus: Phosphopantetheine adenylyltransferase (186 aa).

Thr14 is a substrate binding site. Residues 14–15 (TF) and His22 contribute to the ATP site. Residues Lys46, Leu78, and Arg92 each contribute to the substrate site. Residues 93 to 95 (GLR), Glu103, and 128 to 134 (WLYISST) each bind ATP.

It belongs to the bacterial CoaD family. Homohexamer. Mg(2+) serves as cofactor.

It localises to the cytoplasm. It carries out the reaction (R)-4'-phosphopantetheine + ATP + H(+) = 3'-dephospho-CoA + diphosphate. It functions in the pathway cofactor biosynthesis; coenzyme A biosynthesis; CoA from (R)-pantothenate: step 4/5. Reversibly transfers an adenylyl group from ATP to 4'-phosphopantetheine, yielding dephospho-CoA (dPCoA) and pyrophosphate. This Nitratidesulfovibrio vulgaris (strain ATCC 29579 / DSM 644 / CCUG 34227 / NCIMB 8303 / VKM B-1760 / Hildenborough) (Desulfovibrio vulgaris) protein is Phosphopantetheine adenylyltransferase.